Reading from the N-terminus, the 260-residue chain is Ribose-5-phosphate isomerase A (260 aa).

Residues 33-36 (TGST), 89-92 (DGAD), and 102-105 (KGGG) each bind substrate. E111 (proton acceptor) is an active-site residue. Residue K129 coordinates substrate.

The protein belongs to the ribose 5-phosphate isomerase family. Homodimer.

It catalyses the reaction aldehydo-D-ribose 5-phosphate = D-ribulose 5-phosphate. It functions in the pathway carbohydrate degradation; pentose phosphate pathway; D-ribose 5-phosphate from D-ribulose 5-phosphate (non-oxidative stage): step 1/1. Its function is as follows. Catalyzes the reversible conversion of ribose-5-phosphate to ribulose 5-phosphate. The protein is Ribose-5-phosphate isomerase A of Dinoroseobacter shibae (strain DSM 16493 / NCIMB 14021 / DFL 12).